The chain runs to 332 residues: T-cell surface glycoprotein CD1b2 (332 aa).

Positions 1–17 (MLLLVLALLAVLFPAGD) are cleaved as a signal peptide. Topologically, residues 18-301 (TQDAFPEPIS…ILYWGNSSIG (284 aa)) are extracellular. 3 N-linked (GlcNAc...) asparagine glycosylation sites follow: Asn38, Asn75, and Asn146. 3 disulfides stabilise this stretch: Cys120/Cys184, Cys149/Cys163, and Cys224/Cys279. Residues 185–295 (PRYLMSVLEA…LGGQDIILYW (111 aa)) enclose the Ig-like domain. Asn297 carries N-linked (GlcNAc...) asparagine glycosylation. A helical transmembrane segment spans residues 302–322 (WIILAVFVSCLIVLLFYVLWF). The Cytoplasmic segment spans residues 323–332 (YKHWSYQDIL). Positions 328–331 (YQDI) match the Internalization signal motif.

In terms of assembly, heterodimer with B2M (beta-2-microglobulin). Interacts with saposin C.

Its subcellular location is the cell membrane. It localises to the endosome membrane. The protein resides in the lysosome membrane. Antigen-presenting protein that binds self and non-self lipid and glycolipid antigens and presents them to T-cell receptors on natural killer T-cells. The polypeptide is T-cell surface glycoprotein CD1b2 (CD1B2) (Cavia porcellus (Guinea pig)).